Here is a 745-residue protein sequence, read N- to C-terminus: 5-methyltetrahydropteroyltriglutamate--homocysteine methyltransferase (745 aa).

5-methyltetrahydropteroyltri-L-glutamate contacts are provided by residues 19–22 and Lys119; that span reads RELK. L-homocysteine-binding positions include 418 to 420 and Glu471; that span reads IGS. Residues 418–420 and Glu471 each bind L-methionine; that span reads IGS. Residues 502 to 503 and Trp548 contribute to the 5-methyltetrahydropteroyltri-L-glutamate site; that span reads RC. Asp586 is a binding site for L-homocysteine. An L-methionine-binding site is contributed by Asp586. Glu592 provides a ligand contact to 5-methyltetrahydropteroyltri-L-glutamate. His628, Cys630, and Glu652 together coordinate Zn(2+). The active-site Proton donor is the His681. Cys713 lines the Zn(2+) pocket.

This sequence belongs to the vitamin-B12 independent methionine synthase family. Zn(2+) is required as a cofactor.

The catalysed reaction is 5-methyltetrahydropteroyltri-L-glutamate + L-homocysteine = tetrahydropteroyltri-L-glutamate + L-methionine. The protein operates within amino-acid biosynthesis; L-methionine biosynthesis via de novo pathway; L-methionine from L-homocysteine (MetE route): step 1/1. Its function is as follows. Catalyzes the transfer of a methyl group from 5-methyltetrahydrofolate to homocysteine resulting in methionine formation. The chain is 5-methyltetrahydropteroyltriglutamate--homocysteine methyltransferase from Corynebacterium glutamicum (strain R).